Here is an 853-residue protein sequence, read N- to C-terminus: Protein translocase subunit SecA 1 (853 aa).

ATP-binding positions include Q85, 103–107, and D492; that span reads GEGKT.

It belongs to the SecA family. As to quaternary structure, monomer and homodimer. Part of the essential Sec protein translocation apparatus which comprises SecA, SecYEG and auxiliary proteins SecDF. Other proteins may also be involved.

It is found in the cell membrane. The protein resides in the cytoplasm. The catalysed reaction is ATP + H2O + cellular proteinSide 1 = ADP + phosphate + cellular proteinSide 2.. Its function is as follows. Part of the Sec protein translocase complex. Interacts with the SecYEG preprotein conducting channel. Has a central role in coupling the hydrolysis of ATP to the transfer of proteins into and across the cell membrane, serving as an ATP-driven molecular motor driving the stepwise translocation of polypeptide chains across the membrane. The polypeptide is Protein translocase subunit SecA 1 (Corynebacterium diphtheriae (strain ATCC 700971 / NCTC 13129 / Biotype gravis)).